A 274-amino-acid polypeptide reads, in one-letter code: Large ribosomal subunit protein uL2 (274 aa).

2 disordered regions span residues 1–23 (MAIK…SFEE) and 222–242 (GSAM…SPIG).

It belongs to the universal ribosomal protein uL2 family. In terms of assembly, part of the 50S ribosomal subunit. Forms a bridge to the 30S subunit in the 70S ribosome.

Its function is as follows. One of the primary rRNA binding proteins. Required for association of the 30S and 50S subunits to form the 70S ribosome, for tRNA binding and peptide bond formation. It has been suggested to have peptidyltransferase activity; this is somewhat controversial. Makes several contacts with the 16S rRNA in the 70S ribosome. This Dehalococcoides mccartyi (strain ATCC BAA-2266 / KCTC 15142 / 195) (Dehalococcoides ethenogenes (strain 195)) protein is Large ribosomal subunit protein uL2.